The primary structure comprises 1530 residues: Multidrug resistance-associated protein 1 (1530 aa).

The Extracellular segment spans residues 1 to 33; it reads MALRDFCSVDGSDLFWEWNVTWNTSNPDFTKCF. Residue N19 is glycosylated (N-linked (GlcNAc...) asparagine). Residues 34–54 form a helical membrane-spanning segment; sequence QNTVLVWVPCSYLWVCFPFYF. At 55–74 the chain is on the cytoplasmic side; it reads LYLSHHDRGYIQMTHLNKAK. The chain crosses the membrane as a helical span at residues 75–95; it reads TALGFLLWIVCWADLFYSFWE. The Extracellular portion of the chain corresponds to 96–100; the sequence is RSMGK. Residues 101–121 traverse the membrane as a helical segment; sequence LLAPVFLVSPTLLGITMLLAT. Topologically, residues 122–133 are cytoplasmic; it reads FLIQIERRRGVQ. The helical transmembrane segment at 134 to 154 threads the bilayer; it reads SSGIMLTFWLIALLCALAILR. Residues 155–172 lie on the Extracellular side of the membrane; it reads SKIMTALKEDARVDVFRD. A helical transmembrane segment spans residues 173–193; sequence VTFYIYFSLVLIQLVLSCFSD. The Cytoplasmic portion of the chain corresponds to 194–316; that stretch reads RSPLFSETIN…KERDPSLFKV (123 aa). Phosphotyrosine is present on Y277. Phosphoserine is present on S289. Residues 317–337 form a helical membrane-spanning segment; the sequence is LYKTFGPYFLMSFLFKAVHDL. Residues 325–608 form the ABC transmembrane type-1 1 domain; the sequence is FLMSFLFKAV…LPMVISSIVQ (284 aa). The Extracellular portion of the chain corresponds to 338-363; it reads MMFAGPEILKLLINFVNDKKAPEWQG. Residues 364 to 384 form a helical membrane-spanning segment; the sequence is YFYTALLFISACLQTLVLHQY. The Cytoplasmic segment spans residues 385–440; that stretch reads FHICFVSGMRIKTAVIGAVYRKALVITNAARKSSTVGEIVNLMSVDAQRFMDLATY. The chain crosses the membrane as a helical span at residues 441–461; it reads INMIWSAPLQVILALYLLWLN. The Extracellular portion of the chain corresponds to 462-464; sequence LGP. Residues 465-485 form a helical membrane-spanning segment; that stretch reads SVLAGVAVMVLMVPLNAVMAM. The Cytoplasmic portion of the chain corresponds to 486-547; that stretch reads KTKTYQVAHM…VLKKSAYLAA (62 aa). At K503 the chain carries N6-succinyllysine. The chain crosses the membrane as a helical span at residues 548 to 568; that stretch reads VGTFTWVCTPFLVALSTFAVY. At 569–590 the chain is on the extracellular side; sequence VTVDENNILDAQKAFVSLALFN. The helical transmembrane segment at 591–611 threads the bilayer; it reads ILRFPLNILPMVISSIVQASV. The Cytoplasmic segment spans residues 612-966; the sequence is SLKRLRVFLS…VKLSVYWDYM (355 aa). Positions 644–868 constitute an ABC transporter 1 domain; that stretch reads ITVKNATFTW…DGAFAEFLRT (225 aa). 678–685 serves as a coordination point for ATP; the sequence is GQVGCGKS. The segment at 912–939 is disordered; that stretch reads RQLSSSSSYSRDVSQHHTSTAELRKPGP. 2 positions are modified to phosphoserine: S915 and S930. The helical transmembrane segment at 967–987 threads the bilayer; it reads KAIGLFISFLSIFLFLCNHVA. One can recognise an ABC transmembrane type-1 2 domain in the interval 974-1255; that stretch reads SFLSIFLFLC…LVRMSSEMET (282 aa). Topologically, residues 988–1024 are extracellular; sequence SLVSNYWLSLWTDDPIVNGTQEHTQVRLSVYGALGIS. A glycan (N-linked (GlcNAc...) asparagine) is linked at N1005. Residues 1025 to 1045 traverse the membrane as a helical segment; the sequence is QGITVFGYSMAVSIGGIFASR. Residues 1046-1088 lie on the Cytoplasmic side of the membrane; that stretch reads RLHLDLLHNVLRSPISFFERTPSGNLVNRFSKELDTVDSMIPQ. Residues 1089–1109 form a helical membrane-spanning segment; sequence VIKMFMGSLFNVIGACIIILL. A1110 is a topological domain (extracellular). A helical membrane pass occupies residues 1111–1131; that stretch reads TPMAAVIIPPLGLIYFFVQRF. At 1132–1202 the chain is on the cytoplasmic side; that stretch reads YVASSRQLKR…VANRWLAVRL (71 aa). A helical membrane pass occupies residues 1203 to 1223; it reads ECVGNCIVLFASLFAVISRHS. Topologically, residues 1224-1225 are extracellular; sequence LS. A helical transmembrane segment spans residues 1226–1246; sequence AGLVGLSVSYSLQVTTYLNWL. The Cytoplasmic segment spans residues 1247–1530; that stretch reads VRMSSEMETN…YSMAKDSGLV (284 aa). In terms of domain architecture, ABC transporter 2 spans 1292–1526; it reads VEFRDYGLRY…RGLFYSMAKD (235 aa). 1326-1333 contacts ATP; it reads GRTGAGKS.

The protein belongs to the ABC transporter superfamily. ABCC family. Conjugate transporter (TC 3.A.1.208) subfamily. In terms of tissue distribution, expressed in heart, spleen, lung, kidney, skeletal muscle, mammary gland and weaker in brain and liver.

The protein localises to the cell membrane. It is found in the basolateral cell membrane. It catalyses the reaction ATP + H2O + xenobioticSide 1 = ADP + phosphate + xenobioticSide 2.. It carries out the reaction an S-substituted glutathione(in) + ATP + H2O = an S-substituted glutathione(out) + ADP + phosphate + H(+). The enzyme catalyses sphing-4-enine 1-phosphate(in) + ATP + H2O = sphing-4-enine 1-phosphate(out) + ADP + phosphate + H(+). The catalysed reaction is leukotriene C4(in) + ATP + H2O = leukotriene C4(out) + ADP + phosphate + H(+). It catalyses the reaction 17beta-estradiol 17-O-(beta-D-glucuronate)(in) + ATP + H2O = 17beta-estradiol 17-O-(beta-D-glucuronate)(out) + ADP + phosphate + H(+). It carries out the reaction daunorubicin(in) + ATP + H2O = daunorubicin(out) + ADP + phosphate + H(+). The enzyme catalyses vincristine(in) + ATP + H2O = vincristine(out) + ADP + phosphate + H(+). The catalysed reaction is 2',3'-cGAMP(in) + ATP + H2O = 2',3'-cGAMP(out) + ADP + phosphate + H(+). It catalyses the reaction S-[(2E,6E,10E)-geranylgeranyl]-L-glutathione(in) + ATP + H2O = S-[(2E,6E,10E)-geranylgeranyl]-L-glutathione(out) + ADP + phosphate + H(+). It carries out the reaction prostaglandin A2-S-(R)-glutathione(in) + ATP + H2O = prostaglandin A2-S-(R)-glutathione(out) + ADP + phosphate + H(+). The enzyme catalyses prostaglandin A2-S-(S)-glutathione(in) + ATP + H2O = prostaglandin A2-S-(S)-glutathione(out) + ADP + phosphate + H(+). Its activity is regulated as follows. MK 571 inhibits sphingosine 1-phosphate and leukotriene C4 export. Functionally, mediates export of organic anions and drugs from the cytoplasm. Mediates ATP-dependent transport of glutathione and glutathione conjugates, leukotriene C4, estradiol-17-beta-o-glucuronide, methotrexate, antiviral drugs and other xenobiotics. Confers resistance to anticancer drugs by decreasing accumulation of drug in cells, and by mediating ATP- and GSH-dependent drug export. Hydrolyzes ATP with low efficiency. Catalyzes the export of sphingosine 1-phosphate from mast cells independently of their degranulation. Participates in inflammatory response by allowing export of leukotriene C4 from leukotriene C4-synthesizing cells. Mediates ATP-dependent, GSH-independent cyclic GMP-AMP (cGAMP) export. Thus, by limiting intracellular cGAMP concentrations negatively regulates the cGAS-STING pathway. Exports S-geranylgeranyl-glutathione (GGG) in lymphoid cells and stromal compartments of lymphoid organs. ABCC1 (via extracellular transport) with GGT5 (via GGG catabolism) establish GGG gradients within lymphoid tissues to position P2RY8-positive lymphocytes at germinal centers in lymphoid follicles and restrict their chemotactic transmigration from blood vessels to the bone marrow parenchyma. Mediates basolateral export of GSH-conjugated R- and S-prostaglandin A2 diastereomers in polarized epithelial cells. This is Multidrug resistance-associated protein 1 from Bos taurus (Bovine).